The following is a 555-amino-acid chain: Protein PLASTID TRANSCRIPTIONALLY ACTIVE 12, chloroplastic (555 aa).

Residues 1–58 (MASCYNPWRLFPGMSTAVPAGPVTAPAHSRTCKSSKVFSALPHRRGLLFLGTRRARIK) constitute a chloroplast transit peptide. Disordered stretches follow at residues 80-100 (YFDS…SIPG), 115-167 (ARAP…EPDV), and 468-541 (SYNE…IDDS). Positions 144–154 (QVTSASGTEGA) are enriched in polar residues. Composition is skewed to acidic residues over residues 471-480 (EDSDDEDEDV) and 490-502 (LEDE…DVAE). The segment covering 508–519 (NQNWSALKSTGQ) has biased composition (polar residues). The span at 521-538 (EKPKEKSKKDEMTLKEAI) shows a compositional bias: basic and acidic residues.

As to quaternary structure, component of the plastid-encoded plastid RNA polymerase (PEP) complex.

It localises to the plastid. The protein localises to the chloroplast stroma. Its subcellular location is the nucleus. Its function is as follows. Required for the activity of the plastid-encoded RNA polymerase (PEP) and full expression of genes transcribed by PEP. Required for the proper build-up and formation of the PEP-complex. Binds single-stranded (ss) DNA and RNA, but not double-stranded (ds) DNA. The sequence is that of Protein PLASTID TRANSCRIPTIONALLY ACTIVE 12, chloroplastic from Zea mays (Maize).